Consider the following 255-residue polypeptide: H-2 class II histocompatibility antigen, E-U alpha chain (255 aa).

An N-terminal signal peptide occupies residues 1–25 (MATIGALLLRFFFIAVLMSSQKSWA). The segment at 26–109 (IKEEHTIIQA…KRSNNTPDAN (84 aa)) is alpha-1. The Extracellular segment spans residues 26 to 217 (IKEEHTIIQA…KTLLPETKEN (192 aa)). Residues 110–203 (VAPEVTVLSR…GLEEPLRKHW (94 aa)) form an alpha-2 region. The Ig-like C1-type domain occupies 112–204 (PEVTVLSRSP…LEEPLRKHWE (93 aa)). An intrachain disulfide couples Cys132 to Cys188. Asn143 carries an N-linked (GlcNAc...) asparagine glycan. Residues 204 to 216 (EFEEKTLLPETKE) are connecting peptide. Residues 218–238 (VVCALGLFVGLVGIVVGIILI) traverse the membrane as a helical segment. The Cytoplasmic portion of the chain corresponds to 239-255 (MKGIKKRNVVERRQGAL).

This sequence belongs to the MHC class II family.

It is found in the membrane. In Mus musculus (Mouse), this protein is H-2 class II histocompatibility antigen, E-U alpha chain (H2-Ea).